Here is a 662-residue protein sequence, read N- to C-terminus: Transketolase (662 aa).

Residue H28 participates in substrate binding. Residues H68 and 115 to 117 each bind thiamine diphosphate; that span reads GPL. D156 is a binding site for Mg(2+). The thiamine diphosphate site is built by G157 and N186. Mg(2+)-binding residues include N186 and I188. H261, R356, and S383 together coordinate substrate. Thiamine diphosphate is bound at residue H261. E410 functions as the Proton donor in the catalytic mechanism. F436 contributes to the thiamine diphosphate binding site. Residues H460, D468, and R519 each contribute to the substrate site.

Belongs to the transketolase family. In terms of assembly, homodimer. Requires Mg(2+) as cofactor. Ca(2+) is required as a cofactor. It depends on Mn(2+) as a cofactor. Co(2+) serves as cofactor. The cofactor is thiamine diphosphate.

It carries out the reaction D-sedoheptulose 7-phosphate + D-glyceraldehyde 3-phosphate = aldehydo-D-ribose 5-phosphate + D-xylulose 5-phosphate. It functions in the pathway carbohydrate biosynthesis; Calvin cycle. Its pathway is carbohydrate degradation; pentose phosphate pathway. Its function is as follows. Catalyzes the transfer of a two-carbon ketol group from a ketose donor to an aldose acceptor, via a covalent intermediate with the cofactor thiamine pyrophosphate. The sequence is that of Transketolase (tkt) from Staphylococcus aureus (strain MRSA252).